We begin with the raw amino-acid sequence, 826 residues long: G-protein coupled receptor-associated sorting protein 2 (826 aa).

Disordered stretches follow at residues 1-126 (MTGA…AQAW), 204-286 (WCYP…NPFC), 336-371 (EGNR…QESR), and 506-534 (IPEG…DSVA). Residues 13 to 31 (KPDKKPQEEVAGGAERESE) are compositionally biased toward basic and acidic residues. A compositionally biased stretch (polar residues) spans 59 to 73 (SSRARPKTETQSVSG). Positions 231–247 (TREETSIRSWPREEVNT) are enriched in basic and acidic residues. The segment covering 248 to 264 (RSRHRAKHQTNARSKPR) has biased composition (basic residues). Phosphoserine is present on residues S275 and S277.

It belongs to the GPRASP family. Interacts with cytoplasmic tails of a variety of G-protein coupled receptors such as muscarinic acetylcholine receptor M1/CHRM1 and calcitonin receptor/CALCR. In terms of tissue distribution, strongly expressed in the brain and the cochlea. Also in lung and muscle tissues. Localized in multiple structures of the cochlea, detected in the spiral ganglion, stria vascularis, spiral ligament, inner and outer hair cells.

In terms of biological role, may play a role in regulation of a variety of G-protein coupled receptors. In Mus musculus (Mouse), this protein is G-protein coupled receptor-associated sorting protein 2 (Gprasp2).